The primary structure comprises 7081 residues: Leucine-rich repeat transmembrane protein CCDC168 (7081 aa).

A helical transmembrane segment spans residues 37-57 (WVAIFFIILLGIIFEIILMKA). 2 LRR repeats span residues 233–256 (PCPLAHLFLSRDQVRLLEENVRNQ) and 420–445 (NAEFLVLTLNPNLVTEDMPQLRSVKA). Residues 717-745 (EDLQSSENSHLQLSNGEELPTSTPKTQRC) form a disordered region. Residues 718-742 (DLQSSENSHLQLSNGEELPTSTPKT) show a composition bias toward polar residues. One copy of the LRR 3 repeat lies at 865–890 (ADTLRIIRLSHSASKQEKLPDEKETQ). The segment at 943-1009 (QISSGSSKAP…DPKNPLTMPE (67 aa)) is disordered. The span at 958–970 (VQPQTLSTQTILE) shows a compositional bias: polar residues. Basic and acidic residues predominate over residues 981 to 999 (QVEKVKQSTDRPTDRESAG). The LRR 4 repeat unit spans residues 1050 to 1075 (LPAVALGSFNNHLLTLPYFKRQEIKK). Composition is skewed to polar residues over residues 1274-1286 (KCTADSETPSPIS) and 1295-1304 (LNQTRESYIP). Positions 1274 to 1304 (KCTADSETPSPISGKSLIGDPLNQTRESYIP) are disordered. An LRR 5 repeat occupies 1501-1527 (NCLTLELHINGQRLQHQTGFEQTTLET). Composition is skewed to basic and acidic residues over residues 1773-1784 (ETEKDTLREKRL) and 1793-1804 (TSPHEDSITSRD). Disordered regions lie at residues 1773–1804 (ETEKDTLREKRLSSTQVKQDTSPHEDSITSRD), 1954–1973 (KSPHGGEAQKANLTDMESGS), 2008–2031 (STHQMKDPDPCKSGSEPKSPEGRS), and 2083–2103 (TGKSKIGSIPRDTPWDENPRR). Residues 1964–1973 (ANLTDMESGS) show a composition bias toward polar residues. The LRR 6 repeat unit spans residues 2373-2397 (KNQINTIQLSERKIILNPKCLTMKE). Residues 2637–2680 (GRHSPASEEMKRQNGRLKMADRSSPQGRPLQAKQSAVSQSPDTA) are disordered. Positions 2668 to 2678 (AKQSAVSQSPD) are enriched in polar residues. LRR repeat units lie at residues 2727-2749 (SKIHPLQIENKKEFKTADWKTRA), 2832-2855 (IQQQKSFQLSKNAVHRVLKAVYDS), 2862-2889 (IKKLTEVKMEKDKPKDRTCILPQPKLEK), 3433-3458 (LSSRTPGLDLFSADQLSTITKNRLEW), and 3630-3653 (ILSLPHFKLNKETIDGVISSNVKS). The segment at 3730-3756 (SLSHSNSNSRTKAGKDKSGTLKGCLPP) is disordered. Residues 3875-3898 (MRGITRFCLSSSTQQELSDTMEKC) form an LRR 12 repeat. 8 disordered regions span residues 4119-4260 (ELSH…DGDK), 4293-4428 (QGII…KQET), 4729-4756 (QESLPSRQTAPTKPTESLVKKEKQLLPQ), 4794-4817 (SPLSKRKEPQWGMKERAGQKQDRT), 4831-4859 (MPSLSHHRFSPSQPKLPISSGAGKSRLAN), 4928-4955 (GVQESKKEPGVVPRKSASFPPPPFYLNC), 4966-4985 (LGKTQFSFPPLKIQDSSDSG), and 5191-5212 (QKVKSGPGVMLSKSPSRSSPLH). Composition is skewed to basic and acidic residues over residues 4121-4133 (SHQKSSEAGEKAD), 4147-4176 (KAKDYMQQKEDDEVKISAKKDIMHPEDKGL), 4192-4245 (EPGK…EQQK), 4329-4361 (QKAKDYMQQKEEDEVKISAEKDLMHPEDKDLKG), 4375-4401 (EPGKRDGEGQEQGKEDGEGEEQGNRDG), and 4415-4426 (EQEKRDGHKSKQ). Over residues 4731-4743 (SLPSRQTAPTKPT) the composition is skewed to polar residues. Composition is skewed to basic and acidic residues over residues 4746-4756 (LVKKEKQLLPQ) and 4798-4817 (KRKEPQWGMKERAGQKQDRT). Positions 5203–5212 (KSPSRSSPLH) are enriched in polar residues. The stretch at 5311 to 5336 (LSQLELDKETHLGNEMLRLKRPILRR) is one LRR 13 repeat. Residues 5467–5496 (LPDTEKTADAEARSGDVRKGKPHRSQKENR) are disordered. Basic and acidic residues predominate over residues 5469 to 5496 (DTEKTADAEARSGDVRKGKPHRSQKENR). The stretch at 5522-5545 (LNAKELVLNINKLEKKVHKDKDEA) is one LRR 14 repeat. Disordered stretches follow at residues 5564 to 5583 (LDSGNKTDKDTPGITGSSCP) and 5763 to 5792 (QQETSSKVSPELAGSCKFDKPKEDGQSNDR). Basic and acidic residues predominate over residues 5779 to 5792 (KFDKPKEDGQSNDR). LRR repeat units lie at residues 5901–5924 (KQALLISEQEEGVLEFLPKSLFPP), 6259–6282 (PDLRIIEQEEKILKRILTPTECPS), 6419–6442 (HLESKALEIQLNLIPEMARKSLQM), 6552–6575 (HFSVKTLEIQMKAFPRIVRESYAM), and 6613–6637 (QIDLDLQYKYLRFLLGLPVGSTFPK). 2 disordered regions span residues 6859–6878 (CKSHKSRKYRSSSKMKSPDW) and 6916–6950 (APLTESNIKSHLAKNQGKSHRHPESQERKKARSDL). Positions 6860–6871 (KSHKSRKYRSSS) are enriched in basic residues. A compositionally biased stretch (basic and acidic residues) spans 6937–6950 (HPESQERKKARSDL). One copy of the LRR 20 repeat lies at 7012–7036 (NRPFFFACVPADSLEVIPKTIRWTI).

The protein localises to the membrane. This Homo sapiens (Human) protein is Leucine-rich repeat transmembrane protein CCDC168.